A 214-amino-acid polypeptide reads, in one-letter code: RNA pyrophosphohydrolase (214 aa).

The 144-residue stretch at 6 to 149 (GFRPNVGIIL…KRDVYQLALT (144 aa)) folds into the Nudix hydrolase domain. The Nudix box motif lies at 38–59 (GGIKYGETPMQAMYRELHEETG).

The protein belongs to the Nudix hydrolase family. RppH subfamily. The cofactor is a divalent metal cation.

Functionally, accelerates the degradation of transcripts by removing pyrophosphate from the 5'-end of triphosphorylated RNA, leading to a more labile monophosphorylated state that can stimulate subsequent ribonuclease cleavage. This Burkholderia cenocepacia (strain ATCC BAA-245 / DSM 16553 / LMG 16656 / NCTC 13227 / J2315 / CF5610) (Burkholderia cepacia (strain J2315)) protein is RNA pyrophosphohydrolase.